Consider the following 109-residue polypeptide: T cell receptor alpha variable 25 (109 aa).

The signal sequence occupies residues 1-19 (MLLITSMLVLWMQLSQVNG). An Ig-like domain is found at 20-109 (QQVMQIPQYQ…TDVGTYFCAG (90 aa)). Residues cysteine 41 and cysteine 107 are joined by a disulfide bond. Asparagine 42 and asparagine 89 each carry an N-linked (GlcNAc...) asparagine glycan.

As to quaternary structure, alpha-beta TR is a heterodimer composed of an alpha and beta chain; disulfide-linked. The alpha-beta TR is associated with the transmembrane signaling CD3 coreceptor proteins to form the TR-CD3 (TcR or TCR). The assembly of alpha-beta TR heterodimers with CD3 occurs in the endoplasmic reticulum where a single alpha-beta TR heterodimer associates with one CD3D-CD3E heterodimer, one CD3G-CD3E heterodimer and one CD247 homodimer forming a stable octameric structure. CD3D-CD3E and CD3G-CD3E heterodimers preferentially associate with TR alpha and TR beta chains, respectively. The association of the CD247 homodimer is the last step of TcR assembly in the endoplasmic reticulum and is required for transport to the cell surface.

It localises to the cell membrane. In terms of biological role, v region of the variable domain of T cell receptor (TR) alpha chain that participates in the antigen recognition. Alpha-beta T cell receptors are antigen specific receptors which are essential to the immune response and are present on the cell surface of T lymphocytes. Recognize peptide-major histocompatibility (MH) (pMH) complexes that are displayed by antigen presenting cells (APC), a prerequisite for efficient T cell adaptive immunity against pathogens. Binding of alpha-beta TR to pMH complex initiates TR-CD3 clustering on the cell surface and intracellular activation of LCK that phosphorylates the ITAM motifs of CD3G, CD3D, CD3E and CD247 enabling the recruitment of ZAP70. In turn ZAP70 phosphorylates LAT, which recruits numerous signaling molecules to form the LAT signalosome. The LAT signalosome propagates signal branching to three major signaling pathways, the calcium, the mitogen-activated protein kinase (MAPK) kinase and the nuclear factor NF-kappa-B (NF-kB) pathways, leading to the mobilization of transcription factors that are critical for gene expression and essential for T cell growth and differentiation. The T cell repertoire is generated in the thymus, by V-(D)-J rearrangement. This repertoire is then shaped by intrathymic selection events to generate a peripheral T cell pool of self-MH restricted, non-autoaggressive T cells. Post-thymic interaction of alpha-beta TR with the pMH complexes shapes TR structural and functional avidity. The chain is T cell receptor alpha variable 25 from Homo sapiens (Human).